The primary structure comprises 1028 residues: Kinesin-like protein KIF28 (1028 aa).

The Kinesin motor domain occupies 11-358; sequence SVRVAVRVRP…LRYAERAKKV (348 aa). 114-121 contacts ATP; it reads GQTGSGKS. The FHA domain maps to 460–523; that stretch reads CDVGRAASNA…LQHLDRIILG (64 aa). Positions 873-902 form a coiled coil; sequence NQVPELYQKLLKLEQETELLRDVNRALRGE.

The protein belongs to the TRAFAC class myosin-kinesin ATPase superfamily. Kinesin family.

Its subcellular location is the mitochondrion membrane. Microtubule-dependent motor protein required for mitochondrion morphology and transport of mitochondria in neuronal cells. This is Kinesin-like protein KIF28 from Mus musculus (Mouse).